Consider the following 502-residue polypeptide: MISKSSPLIFERSKKDRYAYSLPQNDIENISIASLLDDKYIRKHKAEFPEVSELDLVRHYTELSNKNFGVDTGFYPLGSCTMKYNPKINEKVARISGFSESHPLQEEEHVQGSLEIIYSLQEELKEITGMDEVTLQPAAGAHGEWTALMIFKAYHEKNGQSHRDEVIVPDSAHGTNPASASFAGFKSVTVKSNQRGEVDIEDLKRVVNDNTAAIMLTNPNTLGIFEQDIIEIGKIVHEAGGLLYYDGANLNAILDKVRPGDMGFDAVHLNLHKTFTGPHGGGGPGSGPVGVVEKLASYLPKPMVIKDNDRYKYDNDIPNSIGRVKPFYGNFGIYLRAYTYIRSMGANGLKEVSEAAVLNANYIKSRLKNHFEIPFNQYCKHEFVLSGTLQKQYGVRTLDMAKRLLDFGVHPPTIYFPLNVEEGMMIEPTETESKETLDYFIDAMIQIADETKNDPDKVLEAPHTTIIDRLDETTAARKPILKFEELKDEKYKEHTNIDSEDN.

Lys273 carries the N6-(pyridoxal phosphate)lysine modification.

It belongs to the GcvP family. C-terminal subunit subfamily. The glycine cleavage system is composed of four proteins: P, T, L and H. In this organism, the P 'protein' is a heterodimer of two subunits. Pyridoxal 5'-phosphate serves as cofactor.

It carries out the reaction N(6)-[(R)-lipoyl]-L-lysyl-[glycine-cleavage complex H protein] + glycine + H(+) = N(6)-[(R)-S(8)-aminomethyldihydrolipoyl]-L-lysyl-[glycine-cleavage complex H protein] + CO2. Functionally, the glycine cleavage system catalyzes the degradation of glycine. The P protein binds the alpha-amino group of glycine through its pyridoxal phosphate cofactor; CO(2) is released and the remaining methylamine moiety is then transferred to the lipoamide cofactor of the H protein. This is Probable glycine dehydrogenase (decarboxylating) subunit 2 from Staphylococcus epidermidis (strain ATCC 35984 / DSM 28319 / BCRC 17069 / CCUG 31568 / BM 3577 / RP62A).